Consider the following 185-residue polypeptide: Bacteriocin UviA (185 aa).

May have a role in bacteriocin secretion or immunity. The sequence is that of Bacteriocin UviA (uviA) from Clostridium perfringens.